The sequence spans 301 residues: Oxaloacetate tautomerase YisK (301 aa).

Lys99 serves as a coordination point for oxalate. Residues Glu148, Glu150, and Asp179 each coordinate Mn(2+). Positions 196 and 266 each coordinate oxalate.

It belongs to the FAH family. Homodimer. The cofactor is Mg(2+). Mn(2+) serves as cofactor.

Its subcellular location is the cytoplasm. The catalysed reaction is oxaloacetate = enol-oxaloacetate. It catalyses the reaction oxaloacetate + H(+) = pyruvate + CO2. Functionally, tautomerase that converts enol-oxaloacetate to the keto form of oxaloacetate. Also shows weak oxaloacetate decarboxylase (ODx), catalyzing the decarboxylation of oxaloacetate (OAA) to pyruvate and CO(2). The polypeptide is Oxaloacetate tautomerase YisK (Bacillus subtilis (strain 168)).